A 483-amino-acid chain; its full sequence is Aspartyl/glutamyl-tRNA(Asn/Gln) amidotransferase subunit B (483 aa).

This sequence belongs to the GatB/GatE family. GatB subfamily. In terms of assembly, heterotrimer of A, B and C subunits.

It carries out the reaction L-glutamyl-tRNA(Gln) + L-glutamine + ATP + H2O = L-glutaminyl-tRNA(Gln) + L-glutamate + ADP + phosphate + H(+). The catalysed reaction is L-aspartyl-tRNA(Asn) + L-glutamine + ATP + H2O = L-asparaginyl-tRNA(Asn) + L-glutamate + ADP + phosphate + 2 H(+). Its function is as follows. Allows the formation of correctly charged Asn-tRNA(Asn) or Gln-tRNA(Gln) through the transamidation of misacylated Asp-tRNA(Asn) or Glu-tRNA(Gln) in organisms which lack either or both of asparaginyl-tRNA or glutaminyl-tRNA synthetases. The reaction takes place in the presence of glutamine and ATP through an activated phospho-Asp-tRNA(Asn) or phospho-Glu-tRNA(Gln). This chain is Aspartyl/glutamyl-tRNA(Asn/Gln) amidotransferase subunit B, found in Rickettsia rickettsii (strain Sheila Smith).